A 915-amino-acid polypeptide reads, in one-letter code: Probable inorganic carbon transporter subunit DabA (915 aa).

Positions 392, 394, 566, and 581 each coordinate Zn(2+).

This sequence belongs to the inorganic carbon transporter (TC 9.A.2) DabA family. Forms a complex with DabB. Requires Zn(2+) as cofactor.

It localises to the cell inner membrane. In terms of biological role, part of an energy-coupled inorganic carbon pump. The protein is Probable inorganic carbon transporter subunit DabA of Nitrosospira multiformis (strain ATCC 25196 / NCIMB 11849 / C 71).